The sequence spans 73 residues: Large ribosomal subunit protein bL31 (73 aa).

Belongs to the bacterial ribosomal protein bL31 family. Type A subfamily. In terms of assembly, part of the 50S ribosomal subunit. Contacts protein L9.

Binds the 23S rRNA and interacts with the tRNA in the E site. This Deinococcus radiodurans (strain ATCC 13939 / DSM 20539 / JCM 16871 / CCUG 27074 / LMG 4051 / NBRC 15346 / NCIMB 9279 / VKM B-1422 / R1) protein is Large ribosomal subunit protein bL31 (rpmE).